A 316-amino-acid chain; its full sequence is Delta(1)-pyrroline-2-carboxylate reductase (316 aa).

Belongs to the ornithine cyclodeaminase/mu-crystallin family.

It carries out the reaction L-proline + NAD(+) = 1-pyrroline-2-carboxylate + NADH + H(+). The enzyme catalyses L-proline + NADP(+) = 1-pyrroline-2-carboxylate + NADPH + H(+). Catalyzes the reduction of Delta(1)-pyrroline-2-carboxylate (Pyr2C) to L-proline, using preferentially NADPH over NADH as the electron donor. Is likely involved in a degradation pathway that converts trans-3-hydroxy-L-proline (t3LHyp) to L-proline, which would allow P.denitrificans to grow on t3LHyp as a sole carbon source. The chain is Delta(1)-pyrroline-2-carboxylate reductase from Paracoccus denitrificans (strain Pd 1222).